A 367-amino-acid chain; its full sequence is Innexin inx4 (367 aa).

The Cytoplasmic segment spans residues 1–21 (MYAAVKPLSKYLQFKSVHIYD). Residues 22–42 (AIFTLHSKVTVALLLACTFLL) form a helical membrane-spanning segment. Over 43–110 (SSKQYFGDPI…PENRNYITYY (68 aa)) the chain is Extracellular. Residues 111–131 (QWVVLVLLLESFVFYMPAFLW) traverse the membrane as a helical segment. At 132 to 186 (KIWEGGRLKHLCDDFHKMAVCKDKSRTHLRVLVNYFSSDYKETHFRYFVSYVFCE) the chain is on the cytoplasmic side. Residues 187–207 (ILNLSISILNFLLLDVFFGGF) form a helical membrane-spanning segment. Over 208–268 (WGRYRNALLS…LLPLNILNEK (61 aa)) the chain is Extracellular. A helical transmembrane segment spans residues 269–289 (IFAFLWIWFILVAMLISLKFL). The Cytoplasmic segment spans residues 290–367 (YRLATVLYPG…IKIPPGADKI (78 aa)).

It belongs to the pannexin family. Expressed in nurse cells and oocyte during oogenesis. Uniform expression in imaginal wing disk and low expression in developing imaginal CNS. Expressed in embryonic pole cells and primordial germ cells.

The protein resides in the cell membrane. It is found in the cell junction. It localises to the gap junction. Functionally, structural component of the gap junctions in germline cells. Required for differentiation and survival of germline cysts in females and of spermatogonia in males; gap junctional communication between spermatogonia and somatic cyst cells may be required for normal differentiation and survival of spermatogonia. The sequence is that of Innexin inx4 (zpg) from Drosophila melanogaster (Fruit fly).